Consider the following 872-residue polypeptide: DNA mismatch repair protein MutS (872 aa).

Position 602–609 (602–609) interacts with ATP; sequence GPNMSGKS.

Belongs to the DNA mismatch repair MutS family.

Functionally, this protein is involved in the repair of mismatches in DNA. It is possible that it carries out the mismatch recognition step. This protein has a weak ATPase activity. This is DNA mismatch repair protein MutS from Staphylococcus aureus (strain Mu3 / ATCC 700698).